The sequence spans 384 residues: 8-amino-7-oxononanoate synthase (384 aa).

Arginine 21 is a binding site for substrate. 108–109 (GF) contributes to the pyridoxal 5'-phosphate binding site. Histidine 133 is a substrate binding site. Pyridoxal 5'-phosphate-binding residues include serine 179, histidine 207, and threonine 233. Position 236 is an N6-(pyridoxal phosphate)lysine (lysine 236). Threonine 352 contacts substrate.

Belongs to the class-II pyridoxal-phosphate-dependent aminotransferase family. BioF subfamily. As to quaternary structure, homodimer. Pyridoxal 5'-phosphate serves as cofactor.

It carries out the reaction 6-carboxyhexanoyl-[ACP] + L-alanine + H(+) = (8S)-8-amino-7-oxononanoate + holo-[ACP] + CO2. The protein operates within cofactor biosynthesis; biotin biosynthesis. In terms of biological role, catalyzes the decarboxylative condensation of pimeloyl-[acyl-carrier protein] and L-alanine to produce 8-amino-7-oxononanoate (AON), [acyl-carrier protein], and carbon dioxide. This chain is 8-amino-7-oxononanoate synthase, found in Shigella flexneri serotype 5b (strain 8401).